We begin with the raw amino-acid sequence, 69 residues long: DNA-directed RNA polymerase subunit epsilon (69 aa).

It belongs to the RNA polymerase subunit epsilon family. In terms of assembly, monomer. RNAP is composed of a core of 2 alpha, a beta and a beta' subunit. The core is associated with a delta subunit, and at least one of epsilon or omega. When a sigma factor is associated with the core the holoenzyme is formed, which can initiate transcription.

The protein resides in the cytoplasm. It is found in the nucleoid. It catalyses the reaction RNA(n) + a ribonucleoside 5'-triphosphate = RNA(n+1) + diphosphate. In terms of biological role, a non-essential component of RNA polymerase (RNAP). Has a similar structure to bacteriophage T7 protein Gp2 (AC P03704), which is known to bind to RNAP in the DNA binding-cleft. Unlike Gp2 however, this protein does not inhibit transcription initiation. In vitro reconstitution experiments show this subunit is dispensible. The sequence is that of DNA-directed RNA polymerase subunit epsilon from Bacillus subtilis (strain 168).